The primary structure comprises 691 residues: Pentatricopeptide repeat-containing protein At4g37170 (691 aa).

PPR repeat units follow at residues 84-118 (PAST…GFVP), 119-149 (GIVI…MPNR), 150-184 (DLCS…DSYS), 185-211 (WTAM…MQRV), 217-251 (NIFT…GLDS), 252-286 (DEVL…DVVS), 287-317 (WTSM…CERP), 318-352 (NEYT…GFDP), 353-383 (YSFA…CPKP), 384-418 (DLVS…GTKP), 419-449 (DHVT…ITEK), and 455-485 (TSDH…MPMK). The segment at 490–565 (LWASVLGGCS…RPGSSWTEIK (76 aa)) is type E motif. The segment at 566 to 596 (RKRHVFIAADTSHPMYNQIVEFLRELRKKMK) is type E(+) motif. The interval 597-691 (EEGYVPATSL…NGQCSCGDYW (95 aa)) is type DYW motif.

The protein belongs to the PPR family. PCMP-H subfamily.

The chain is Pentatricopeptide repeat-containing protein At4g37170 (PCMP-H5) from Arabidopsis thaliana (Mouse-ear cress).